A 135-amino-acid polypeptide reads, in one-letter code: Transcription antitermination protein NusB (135 aa).

This sequence belongs to the NusB family.

Involved in transcription antitermination. Required for transcription of ribosomal RNA (rRNA) genes. Binds specifically to the boxA antiterminator sequence of the ribosomal RNA (rrn) operons. The chain is Transcription antitermination protein NusB from Shewanella halifaxensis (strain HAW-EB4).